A 445-amino-acid polypeptide reads, in one-letter code: ATP-dependent rRNA helicase rrp3 (445 aa).

Basic and acidic residues predominate over residues 1–10 (MSKNSSRDSS). Residues 1-28 (MSKNSSRDSSPEEVSPDTETPSTTTAPK) are disordered. Low complexity predominate over residues 17 to 28 (DTETPSTTTAPK). Positions 28–56 (KTFRELGVIDSLCEACEELGYTAPTPIQE) match the Q motif motif. The 171-residue stretch at 59–229 (IPIALEGRDL…RASLSDPVRV (171 aa)) folds into the Helicase ATP-binding domain. 72–79 (AETGSGKT) provides a ligand contact to ATP. Positions 178 to 181 (DEAD) match the DEAD box motif. One can recognise a Helicase C-terminal domain in the interval 240-400 (KLLQSYLFIP…EYKPEKDEVM (161 aa)). Residues 415–445 (LTMRDMQDKDNKGRGPRNRKRTRDDLDQDDG) are disordered.

This sequence belongs to the DEAD box helicase family. DDX47/RRP3 subfamily. Interacts with the SSU processome.

It localises to the nucleus. The enzyme catalyses ATP + H2O = ADP + phosphate + H(+). Functionally, ATP-dependent rRNA helicase required for pre-ribosomal RNA processing. Involved in the maturation of the 35S-pre-rRNA and to its cleavage to mature 18S rRNA. In Aspergillus terreus (strain NIH 2624 / FGSC A1156), this protein is ATP-dependent rRNA helicase rrp3.